The primary structure comprises 326 residues: tRNA dimethylallyltransferase (326 aa).

10–17 is an ATP binding site; it reads GPTGTGKT. 12–17 is a substrate binding site; that stretch reads TGTGKT. Residues 35–38 are interaction with substrate tRNA; it reads DSMQ.

This sequence belongs to the IPP transferase family. As to quaternary structure, monomer. Mg(2+) serves as cofactor.

The enzyme catalyses adenosine(37) in tRNA + dimethylallyl diphosphate = N(6)-dimethylallyladenosine(37) in tRNA + diphosphate. Functionally, catalyzes the transfer of a dimethylallyl group onto the adenine at position 37 in tRNAs that read codons beginning with uridine, leading to the formation of N6-(dimethylallyl)adenosine (i(6)A). In Dictyoglomus turgidum (strain DSM 6724 / Z-1310), this protein is tRNA dimethylallyltransferase.